A 551-amino-acid chain; its full sequence is Intestinal-type alkaline phosphatase 2 (551 aa).

A signal peptide spans 1–19 (MQGAWVLLLLGFRLQLSLS). Asp61 contacts Mg(2+). Residues Asp61 and Ser111 each coordinate Zn(2+). Ser111 acts as the Phosphoserine intermediate in catalysis. Residues Cys140 and Cys202 are joined by a disulfide bond. Asn141 is a glycosylation site (N-linked (GlcNAc...) asparagine). Ser174 provides a ligand contact to Mg(2+). Glu235 lines the Ca(2+) pocket. Asn241 carries N-linked (GlcNAc...) asparagine glycosylation. 3 residues coordinate Ca(2+): Phe288, Glu289, and Asp304. Glu330 contributes to the Mg(2+) binding site. Zn(2+) is bound by residues Asp335, His339, Asp376, and His377. N-linked (GlcNAc...) asparagine glycosylation is present at Asn426. An intrachain disulfide couples Cys485 to Cys492. Residues 496–537 (PPADENRPTTPVQNSTTTTTTTTTTTTTTTTTRVQNSASSLG) form a disordered region. Asn509 carries N-linked (GlcNAc...) asparagine glycosylation. A compositionally biased stretch (low complexity) spans 511–527 (TTTTTTTTTTTTTTTTT). The segment covering 528 to 537 (RVQNSASSLG) has biased composition (polar residues). Residue Asn531 is the site of GPI-anchor amidated asparagine attachment. Residues 532–551 (SASSLGPATAPLAWHYWPRR) constitute a propeptide, removed in mature form.

Belongs to the alkaline phosphatase family. As to quaternary structure, homodimer. Mg(2+) serves as cofactor. It depends on Zn(2+) as a cofactor. Ca(2+) is required as a cofactor.

It is found in the cell membrane. It catalyses the reaction a phosphate monoester + H2O = an alcohol + phosphate. Functionally, alkaline phosphatase that can hydrolyze various phosphate compounds. The sequence is that of Intestinal-type alkaline phosphatase 2 from Rattus norvegicus (Rat).